The primary structure comprises 321 residues: Ribose-phosphate pyrophosphokinase (321 aa).

Residues 44–46 (DGE) and 103–104 (RQ) each bind ATP. 2 residues coordinate Mg(2+): His137 and Asp179. The active site involves Lys202. D-ribose 5-phosphate contacts are provided by residues Arg204, Asp228, and 232-236 (DTAGT).

It belongs to the ribose-phosphate pyrophosphokinase family. Class I subfamily. Homohexamer. Requires Mg(2+) as cofactor.

Its subcellular location is the cytoplasm. The catalysed reaction is D-ribose 5-phosphate + ATP = 5-phospho-alpha-D-ribose 1-diphosphate + AMP + H(+). It functions in the pathway metabolic intermediate biosynthesis; 5-phospho-alpha-D-ribose 1-diphosphate biosynthesis; 5-phospho-alpha-D-ribose 1-diphosphate from D-ribose 5-phosphate (route I): step 1/1. Involved in the biosynthesis of the central metabolite phospho-alpha-D-ribosyl-1-pyrophosphate (PRPP) via the transfer of pyrophosphoryl group from ATP to 1-hydroxyl of ribose-5-phosphate (Rib-5-P). The sequence is that of Ribose-phosphate pyrophosphokinase from Staphylococcus epidermidis (strain ATCC 35984 / DSM 28319 / BCRC 17069 / CCUG 31568 / BM 3577 / RP62A).